Consider the following 812-residue polypeptide: Ras guanine nucleotide exchange factor J (812 aa).

2 stretches are compositionally biased toward low complexity: residues 1–36 and 53–65; these read MSNP…NSKS and LLNR…NLNN. Residues 1 to 146 are disordered; that stretch reads MSNPVSINNS…GGSSGGLNMS (146 aa). The segment covering 75–86 has biased composition (polar residues); that stretch reads SFTSNYQNIYTP. Positions 87-101 are enriched in low complexity; the sequence is NNNSYNSSNNNNNNN. The span at 131–141 shows a compositional bias: gly residues; sequence NSGGGGGGSSG. The region spanning 214–246 is the LisH domain; it reads GRDTMLQLILQHLQFEGLMDSRKLLEEEARVQY. Residues 320-382 form a disordered region; the sequence is IIYVDDKEKE…NNSIGNSNSY (63 aa). Positions 323-343 are enriched in basic and acidic residues; sequence VDDKEKEKEKEKEKEKEKDKF. A compositionally biased stretch (low complexity) spans 344-382; the sequence is GPNSTNSLSGSGSSPNIPSGMNNNSSSIGNNSIGNSNSY. The N-terminal Ras-GEF domain maps to 409-535; sequence NKPQVKAASL…LSESLNAKIK (127 aa). In terms of domain architecture, Ras-GEF spans 573–804; the sequence is DEEEIARQLT…YSRSMSFEPR (232 aa).

In terms of biological role, promotes the exchange of Ras-bound GDP by GTP. The chain is Ras guanine nucleotide exchange factor J (gefJ) from Dictyostelium discoideum (Social amoeba).